The sequence spans 447 residues: Na(+)-translocating NADH-quinone reductase subunit A (447 aa).

This sequence belongs to the NqrA family. As to quaternary structure, composed of six subunits; NqrA, NqrB, NqrC, NqrD, NqrE and NqrF.

The enzyme catalyses a ubiquinone + n Na(+)(in) + NADH + H(+) = a ubiquinol + n Na(+)(out) + NAD(+). NQR complex catalyzes the reduction of ubiquinone-1 to ubiquinol by two successive reactions, coupled with the transport of Na(+) ions from the cytoplasm to the periplasm. NqrA to NqrE are probably involved in the second step, the conversion of ubisemiquinone to ubiquinol. This Cellvibrio japonicus (strain Ueda107) (Pseudomonas fluorescens subsp. cellulosa) protein is Na(+)-translocating NADH-quinone reductase subunit A.